The primary structure comprises 388 residues: Autophagy-related protein 21 (388 aa).

2 WD repeats span residues 179–219 (CHRS…KVHE) and 224–263 (SYTA…RRRS). Positions 220 to 224 (FRRGS) match the L/FRRG motif motif.

Belongs to the WD repeat PROPPIN family.

It localises to the cytoplasm. Its subcellular location is the membrane. The protein resides in the vacuole membrane. Its function is as follows. Involved in peroxisome sequestration to the vacuole during macropexophagy. Also required for microautophagy. The protein is Autophagy-related protein 21 (ATG21) of Pichia angusta (Yeast).